A 173-amino-acid polypeptide reads, in one-letter code: Ribulose bisphosphate carboxylase small subunit, chloroplastic 7 (173 aa).

A chloroplast-targeting transit peptide spans 1 to 49; the sequence is MASIPATVATVAQANMVAPFTGLKSNAAFPVTKKVNDFSTLASNGGRVQ.

The protein belongs to the RuBisCO small chain family. Heterohexadecamer of 8 large and 8 small subunits.

It is found in the plastid. The protein localises to the chloroplast. RuBisCO catalyzes two reactions: the carboxylation of D-ribulose 1,5-bisphosphate, the primary event in carbon dioxide fixation, as well as the oxidative fragmentation of the pentose substrate. Both reactions occur simultaneously and in competition at the same active site. Although the small subunit is not catalytic it is essential for maximal activity. The polypeptide is Ribulose bisphosphate carboxylase small subunit, chloroplastic 7 (Flaveria pringlei).